Consider the following 242-residue polypeptide: MSPSHAEQFSFFLLSGPDLRIADIAGSGNDAGRSRPHLCDIAYGSPCDLAGATDSNPLLMLTYPPEWVKQYRDRDYFSIDPVVRLGRRGFLPVEWSASGWDSGRAYGFFKEAMAFGVGRQGVTLPVRGPQGERSLFTVTSNHPDAYWRQFRMDSMRDLQFLAHHLHDRAMVLSGMRKVADLPRLSRRELQCLEMTANGLLAKQICARLSISVSAVQLYLASARRKLTVATTSEQLLGPRRSN.

An HTH luxR-type domain is found at 177 to 242; the sequence is KVADLPRLSR…EQLLGPRRSN (66 aa). A DNA-binding region (H-T-H motif) is located at residues 201 to 220; the sequence is AKQICARLSISVSAVQLYLA.

This sequence belongs to the autoinducer-regulated transcriptional regulatory protein family.

This is Transcriptional activator protein RaiR (raiR) from Rhizobium etli.